The following is a 698-amino-acid chain: Elongation factor G (698 aa).

A tr-type G domain is found at 8–284; the sequence is ANVRNIGIMA…AVVDFLPSPL (277 aa). Residues 17 to 24, 81 to 85, and 135 to 138 each bind GTP; these read AHIDAGKT, DTPGH, and NKLD. Residues 289-309 are disordered; that stretch reads IEGTGTDGETPLQRKPSTSEP.

This sequence belongs to the TRAFAC class translation factor GTPase superfamily. Classic translation factor GTPase family. EF-G/EF-2 subfamily.

It is found in the cytoplasm. Its function is as follows. Catalyzes the GTP-dependent ribosomal translocation step during translation elongation. During this step, the ribosome changes from the pre-translocational (PRE) to the post-translocational (POST) state as the newly formed A-site-bound peptidyl-tRNA and P-site-bound deacylated tRNA move to the P and E sites, respectively. Catalyzes the coordinated movement of the two tRNA molecules, the mRNA and conformational changes in the ribosome. This Salinispora arenicola (strain CNS-205) protein is Elongation factor G.